A 471-amino-acid polypeptide reads, in one-letter code: Desmin (471 aa).

The interval 2-109 (SQAYSSSQRV…QEFLTTRTNE (108 aa)) is head. Phosphoserine; by CDK1 is present on serine 7. A Phosphoserine; by AURKB modification is found at serine 12. Residue arginine 16 is modified to Omega-N-methylarginine. Residue threonine 17 is modified to Phosphothreonine; by AURKB and ROCK1. Serine 28 is modified (phosphoserine; by CDK1). Phosphoserine is present on serine 31. Serine 32 is subject to Phosphoserine; by CDK1. Arginine 37 is subject to Asymmetric dimethylarginine; alternate. The residue at position 37 (arginine 37) is an Omega-N-methylarginine; alternate. Serine 45 is modified (phosphoserine). Residue arginine 58 is modified to ADP-ribosylarginine. Phosphoserine; by AURKB is present on serine 60. At arginine 70 the chain carries Omega-N-methylarginine. Threonine 77 is modified (phosphothreonine; by ROCK1). Serine 81 carries the post-translational modification Phosphoserine. Positions 109–417 (EKVELQELND…KLLEGEESRI (309 aa)) constitute an IF rod domain. Residues 110-142 (KVELQELNDRFANYIEKVRFLEQQNAALAAEVN) are coil 1A. The segment at 143 to 152 (RLKGREPTRV) is linker 1. Residues 153-253 (AEIYEEELRE…HEEEIRELQA (101 aa)) are coil 1B. Positions 254–269 (QLQEQQVQVEMDMSKP) are linker 12. The segment at 269–416 (PDLTAALRDI…RKLLEGEESR (148 aa)) is interaction with NEB. The interval 270–288 (DLTAALRDIRAQYETIAAK) is coil 2A. Positions 289–296 (NISEAEEW) are linker 2. 4 positions are modified to phosphoserine: serine 291, serine 359, serine 362, and serine 425. The coil 2B stretch occupies residues 297-413 (YKSKVSDLTQ…ATYRKLLEGE (117 aa)). The interval 414–471 (ESRINLPIQTFSALNFRETSPEQRGSEVHTKKTVMIKTIETRDGEVVSEATQQQHEVL) is tail. The interval 439-454 (SEVHTKKTVMIKTIET) is interaction with CRYAB.

The protein belongs to the intermediate filament family. As to quaternary structure, homomer. Interacts with DST. Interacts with MTM1. Interacts with EPPK1; interaction is dependent of higher-order structure of intermediate filament. Interacts with CRYAB. Interacts with NEB (via nebulin repeats 160-164). Interacts (via rod region) with NEBL (via nebulin repeats 1-5). Interacts with ASB2; the interaction targets DES for proteasomal degradation. Interacts with PKP1. Interacts with FLII. ADP-ribosylation prevents ability to form intermediate filaments. Post-translationally, phosphorylation at Ser-7, Ser-28 and Ser-32 by CDK1 and phosphorylation at Ser-60 by AURKB contribute to efficient separation of desmin intermediate filaments during mitosis. In terms of processing, ubiquitination by a SCF-like complex containing ASB2 leads to proteasomal degradation.

It is found in the cytoplasm. Its subcellular location is the myofibril. The protein resides in the sarcomere. The protein localises to the z line. It localises to the cell membrane. It is found in the sarcolemma. Its subcellular location is the nucleus. The protein resides in the cell tip. The protein localises to the nucleus envelope. Functionally, muscle-specific type III intermediate filament essential for proper muscular structure and function. Plays a crucial role in maintaining the structure of sarcomeres, inter-connecting the Z-disks and forming the myofibrils, linking them not only to the sarcolemmal cytoskeleton, but also to the nucleus and mitochondria, thus providing strength for the muscle fiber during activity. In adult striated muscle they form a fibrous network connecting myofibrils to each other and to the plasma membrane from the periphery of the Z-line structures. May act as a sarcomeric microtubule-anchoring protein: specifically associates with detyrosinated tubulin-alpha chains, leading to buckled microtubules and mechanical resistance to contraction. Required for nuclear membrane integrity, via anchoring at the cell tip and nuclear envelope, resulting in maintenance of microtubule-derived intracellular mechanical forces. Contributes to the transcriptional regulation of the NKX2-5 gene in cardiac progenitor cells during a short period of cardiomyogenesis and in cardiac side population stem cells in the adult. Plays a role in maintaining an optimal conformation of nebulette (NEB) on heart muscle sarcomeres to bind and recruit cardiac alpha-actin. The protein is Desmin (DES) of Sus scrofa (Pig).